The sequence spans 451 residues: DNA double-strand break repair protein Mre11 (451 aa).

Mn(2+)-binding residues include D8, H10, D49, and N84. The active-site Proton donor is the H85. Mn(2+)-binding residues include H168, H198, and H200. The interval 374 to 451 (REDNPPDLGD…GRPSLDRWIG (78 aa)) is disordered. Positions 396–416 (GSEESSEEPEESDGEEVGLEV) are enriched in acidic residues.

The protein belongs to the MRE11/RAD32 family. Homodimer. Forms a heterotetramer composed of two Mre11 subunits and two Rad50 subunits. Requires Mn(2+) as cofactor.

Nuclease activity is regulated by Rad50. Its function is as follows. Part of the Rad50/Mre11 complex, which is involved in the early steps of DNA double-strand break (DSB) repair. The complex may facilitate opening of the processed DNA ends to aid in the recruitment of HerA and NurA. Mre11 binds to DSB ends and has both double-stranded 3'-5' exonuclease activity and single-stranded endonuclease activity. The sequence is that of DNA double-strand break repair protein Mre11 from Methanopyrus kandleri (strain AV19 / DSM 6324 / JCM 9639 / NBRC 100938).